Consider the following 300-residue polypeptide: HTH-type transcriptional regulator ArgP (300 aa).

Residues 4-60 (FDYKLLAALAAVVEQGGFERAAQALGLSQSAVSQRIKLLEARVGQPVLVRETPPHPT) form the HTH lysR-type domain. A DNA-binding region (H-T-H motif) is located at residues 21–40 (FERAAQALGLSQSAVSQRIK).

It belongs to the LysR transcriptional regulatory family. As to quaternary structure, homodimer.

Its function is as follows. Controls the transcription of genes involved in arginine and lysine metabolism. This is HTH-type transcriptional regulator ArgP from Pseudomonas aeruginosa (strain UCBPP-PA14).